A 201-amino-acid polypeptide reads, in one-letter code: FMN reductase (NADH) RutF 1 (201 aa).

Residues 167–195 (PRAPRSGSAPAEPARAARAVGARPAEGPA) are compositionally biased toward low complexity. The interval 167-201 (PRAPRSGSAPAEPARAARAVGARPAEGPALALRSA) is disordered.

This sequence belongs to the non-flavoprotein flavin reductase family. RutF subfamily.

It carries out the reaction FMNH2 + NAD(+) = FMN + NADH + 2 H(+). In terms of biological role, catalyzes the reduction of FMN to FMNH2 which is used to reduce pyrimidine by RutA via the Rut pathway. This is FMN reductase (NADH) RutF 1 from Methylorubrum extorquens (strain CM4 / NCIMB 13688) (Methylobacterium extorquens).